The sequence spans 493 residues: 2-amino-4-deoxychorismate synthase (493 aa).

Belongs to the anthranilate synthase component I family. Requires Mg(2+) as cofactor.

The catalysed reaction is (2S)-2-amino-4-deoxychorismate + L-glutamate = chorismate + L-glutamine. Its function is as follows. Converts chorismate to 2-amino-4-deoxychorismate (ADIC). Involved in the biosynthesis of the benzoxazolinate moiety of the enediyne antitumor antibiotic C-1027. The chain is 2-amino-4-deoxychorismate synthase (sgcD) from Streptomyces globisporus.